The primary structure comprises 425 residues: Alpha-muurolene synthase (425 aa).

5 residues coordinate Mg(2+): Asp-97, Asp-101, Asn-240, Ser-244, and Glu-248. Positions 97–101 (DNISD) match the DDXXD motif motif. Residues 348–382 (VAPPPPPPPPTPPPQSSDADTKKQKVKAQDGKGPV) form a disordered region. Residues 349–362 (APPPPPPPPTPPPQ) show a composition bias toward pro residues. Positions 366 to 377 (ADTKKQKVKAQD) are enriched in basic and acidic residues.

The protein belongs to the terpene synthase family. Mg(2+) serves as cofactor.

The enzyme catalyses (2E,6E)-farnesyl diphosphate = alpha-muurolene + diphosphate. The catalysed reaction is (2E,6E)-farnesyl diphosphate = gamma-muurolene + diphosphate. It catalyses the reaction (2E,6E)-farnesyl diphosphate = (+)-(R)-germacrene A + diphosphate. In terms of biological role, sesquiterpene synthase that catalyzes the formation of alpha-muurolene, and at lower level (+)-(R)-germacrene A and gamma-muurolene. This chain is Alpha-muurolene synthase (COP3), found in Coprinopsis cinerea (strain Okayama-7 / 130 / ATCC MYA-4618 / FGSC 9003) (Inky cap fungus).